The following is a 690-amino-acid chain: Ecdysone-inducible protein E75 (690 aa).

Positions 44–120 (TVLCRVCGDK…VGMSRDAVRF (77 aa)) form a DNA-binding region, nuclear receptor. 2 NR C4-type zinc fingers span residues 47–67 (CRVCGDKASGFHYGVHSCEGC) and 84–108 (CTKNQQCSILRINRNRCQYCRLKKC). Residues 154–401 (DAPRLLARVV…QQMWGDEEVC (248 aa)) enclose the NR LBD domain. Disordered regions lie at residues 411–434 (SARSPLGSVSSSESGEAPSDCGTP), 467–516 (LTVT…LEEH), 562–604 (RDTG…LRAP), and 666–690 (APQPLNLSKKSPSPPRSFMPPMLEA). Residues 414–434 (SPLGSVSSSESGEAPSDCGTP) are compositionally biased toward low complexity. Residues 562–571 (RDTGEAEARP) are compositionally biased toward basic and acidic residues. Residues 573–588 (RPTPSPQPMHPHPGSP) show a composition bias toward pro residues. 2 stretches are compositionally biased toward low complexity: residues 589–604 (AHPAHPAHSPRPLRAP) and 667–676 (PQPLNLSKKS).

This sequence belongs to the nuclear hormone receptor family. NR1 subfamily.

It is found in the nucleus. Its function is as follows. Orphan receptor possibly involved in the regulation of genes in the ecdysteroid cascade. This Choristoneura fumiferana (Spruce budworm moth) protein is Ecdysone-inducible protein E75 (E75).